The primary structure comprises 776 residues: Protein translocase subunit SecA 2 (776 aa).

ATP is bound by residues Gln80, 98–102 (GEGKT), and Asp486.

It belongs to the SecA family. In terms of assembly, monomer and homodimer. Part of the essential Sec protein translocation apparatus which comprises SecA, SecYEG and auxiliary proteins SecDF. Other proteins may also be involved.

Its subcellular location is the cell membrane. It localises to the cytoplasm. The enzyme catalyses ATP + H2O + cellular proteinSide 1 = ADP + phosphate + cellular proteinSide 2.. Its function is as follows. Part of the Sec protein translocase complex. Interacts with the SecYEG preprotein conducting channel. Has a central role in coupling the hydrolysis of ATP to the transfer of proteins into and across the cell membrane, serving as an ATP-driven molecular motor driving the stepwise translocation of polypeptide chains across the membrane. In Listeria monocytogenes serotype 4b (strain F2365), this protein is Protein translocase subunit SecA 2.